A 264-amino-acid chain; its full sequence is Glucosamine-6-phosphate deaminase (264 aa).

The active-site Proton acceptor; for enolization step is aspartate 72. Residue aspartate 141 is the For ring-opening step of the active site. The Proton acceptor; for ring-opening step role is filled by histidine 143. Catalysis depends on glutamate 148, which acts as the For ring-opening step.

This sequence belongs to the glucosamine/galactosamine-6-phosphate isomerase family. NagB subfamily. In terms of assembly, homohexamer.

The enzyme catalyses alpha-D-glucosamine 6-phosphate + H2O = beta-D-fructose 6-phosphate + NH4(+). Its pathway is amino-sugar metabolism; N-acetylneuraminate degradation; D-fructose 6-phosphate from N-acetylneuraminate: step 5/5. Its activity is regulated as follows. Allosterically activated by N-acetylglucosamine 6-phosphate (GlcNAc6P). Its function is as follows. Catalyzes the reversible isomerization-deamination of glucosamine 6-phosphate (GlcN6P) to form fructose 6-phosphate (Fru6P) and ammonium ion. This chain is Glucosamine-6-phosphate deaminase, found in Glaesserella parasuis serovar 5 (strain SH0165) (Haemophilus parasuis).